The following is a 349-amino-acid chain: 3-isopropylmalate dehydrogenase (349 aa).

Arg-91, Arg-101, Arg-129, and Asp-219 together coordinate substrate. Asp-219, Asp-243, and Asp-247 together coordinate Mg(2+). 277–289 (GSAPDIAGLGKAN) contributes to the NAD(+) binding site.

This sequence belongs to the isocitrate and isopropylmalate dehydrogenases family. LeuB type 1 subfamily. As to quaternary structure, homodimer. It depends on Mg(2+) as a cofactor. The cofactor is Mn(2+).

The protein resides in the cytoplasm. The catalysed reaction is (2R,3S)-3-isopropylmalate + NAD(+) = 4-methyl-2-oxopentanoate + CO2 + NADH. It participates in amino-acid biosynthesis; L-leucine biosynthesis; L-leucine from 3-methyl-2-oxobutanoate: step 3/4. In terms of biological role, catalyzes the oxidation of 3-carboxy-2-hydroxy-4-methylpentanoate (3-isopropylmalate) to 3-carboxy-4-methyl-2-oxopentanoate. The product decarboxylates to 4-methyl-2 oxopentanoate. This is 3-isopropylmalate dehydrogenase from Zymomonas mobilis subsp. mobilis (strain ATCC 31821 / ZM4 / CP4).